The following is a 148-amino-acid chain: 3-dehydroquinate dehydratase (148 aa).

Tyr-23 serves as the catalytic Proton acceptor. The substrate site is built by Asn-75, His-81, and Asp-88. The active-site Proton donor is His-101. Residues 102–103 and Arg-112 each bind substrate; that span reads LS.

It belongs to the type-II 3-dehydroquinase family. As to quaternary structure, homododecamer.

It carries out the reaction 3-dehydroquinate = 3-dehydroshikimate + H2O. The protein operates within metabolic intermediate biosynthesis; chorismate biosynthesis; chorismate from D-erythrose 4-phosphate and phosphoenolpyruvate: step 3/7. Catalyzes a trans-dehydration via an enolate intermediate. This Xanthomonas campestris pv. campestris (strain B100) protein is 3-dehydroquinate dehydratase.